A 120-amino-acid polypeptide reads, in one-letter code: Large ribosomal subunit protein bL19 (120 aa).

The protein belongs to the bacterial ribosomal protein bL19 family.

In terms of biological role, this protein is located at the 30S-50S ribosomal subunit interface and may play a role in the structure and function of the aminoacyl-tRNA binding site. The polypeptide is Large ribosomal subunit protein bL19 (Crocosphaera subtropica (strain ATCC 51142 / BH68) (Cyanothece sp. (strain ATCC 51142))).